The primary structure comprises 263 residues: Phosphoinositide-3-kinase-interacting protein 1 (263 aa).

Residues 1–18 form the signal peptide; sequence MFGRLYFMLLLSVGLVDC. Residues 19-163 are Extracellular-facing; the sequence is LSVVKDCITN…SGPKKKKDLG (145 aa). Positions 24-99 constitute a Kringle domain; sequence DCITNNGEDY…KKEACDIRIC (76 aa). 3 cysteine pairs are disulfide-bonded: Cys25–Cys99, Cys46–Cys80, and Cys69–Cys94. A glycan (N-linked (GlcNAc...) asparagine) is linked at Asn103. A helical membrane pass occupies residues 164–184; it reads TLGYVLAVFMMAIIILLGGGI. Residues 185 to 263 lie on the Cytoplasmic side of the membrane; it reads TMGYFYKRGR…LMGSAGTPGA (79 aa). The disordered stretch occupies residues 239–263; the sequence is NNQTPTQEPVEGADPLMGSAGTPGA.

It is found in the cell membrane. Negative regulator of hepatic phosphatidylinositol 3-kinase (PI3K) activity. The protein is Phosphoinositide-3-kinase-interacting protein 1 (pik3ip1) of Danio rerio (Zebrafish).